The following is a 78-amino-acid chain: RNA-binding protein Hfq (78 aa).

A Sm domain is found at 10-69 (DPFLNALRKEHVPVSIYLVNGIKLQGHIESFDQYVVLLRNTVTQMVYKHAISTVVPARAV).

This sequence belongs to the Hfq family. In terms of assembly, homohexamer.

In terms of biological role, RNA chaperone that binds small regulatory RNA (sRNAs) and mRNAs to facilitate mRNA translational regulation in response to envelope stress, environmental stress and changes in metabolite concentrations. Also binds with high specificity to tRNAs. This chain is RNA-binding protein Hfq, found in Herminiimonas arsenicoxydans.